The following is a 364-amino-acid chain: Thebaine 6-O-demethylase (364 aa).

A Fe2OG dioxygenase domain is found at 214–314; sequence GTQAMRMNYY…RLSIATFHDP (101 aa). Tyr223 is a 2-oxoglutarate binding site. Fe cation-binding residues include His238, Asp240, and His295. Residues Arg305 and Ser307 each contribute to the 2-oxoglutarate site.

Belongs to the iron/ascorbate-dependent oxidoreductase family. L-ascorbate is required as a cofactor. It depends on Fe cation as a cofactor. Mainly expressed in stems and leaves and, to a lower extent, in capsules and roots.

The catalysed reaction is thebaine + 2-oxoglutarate + O2 = neopinone + formaldehyde + succinate + CO2. It carries out the reaction oripavine + 2-oxoglutarate + O2 = neomorphinone + formaldehyde + succinate + CO2. The enzyme catalyses (S)-canadine + S-adenosyl-L-methionine = (S)-cis-N-methylcanadine + S-adenosyl-L-homocysteine. It catalyses the reaction thebaine + 2-oxoglutarate + O2 = 6-O-demethylthebaine + formaldehyde + succinate + CO2 + H(+). The protein operates within alkaloid biosynthesis; morphine biosynthesis. With respect to regulation, moderate substrate inhibition. Not inhibited in vitro by acylcyclohexanediones. Its function is as follows. Non-heme dioxygenase involved in biosynthesis of morphinan-type benzylisoquinoline and opiate alkaloids natural products. Mediates the conversion of thebaine to neopinone. Also catalyzes, with lower efficiency, the 6-O-demethylation of oripavine to neomorphinone, which is converted spontaneously to morphinone. Supports dealkylation reactions such as O,O-demethylenation in the metabolism of protopine, benzo[c]phenanthridine, and rhoeadine alkaloids; cleaves a methylenedioxy bridge leaving two hydroxyl groups. Catalyzes the O-demethylation of methylenedioxy bridges on protopine alkaloids such as allocryptopine. No activity with (S)-reticuline, salutaridine, papaverine, (S)-corytuberine, (S)-scoulerine, pavine, noscapine or codeine. This chain is Thebaine 6-O-demethylase, found in Papaver somniferum (Opium poppy).